We begin with the raw amino-acid sequence, 36 residues long: Photosystem II reaction center protein Y (36 aa).

Over 1-4 (MDSR) the chain is Lumenal. Residues 5–23 (LLVVLIPVLAAASWAVYNI) form a helical membrane-spanning segment. The Stromal segment spans residues 24–36 (GRVALQQFRKMTS).

It belongs to the PsbY family. PSII is composed of 1 copy each of membrane proteins PsbA, PsbB, PsbC, PsbD, PsbE, PsbF, PsbH, PsbI, PsbJ, PsbK, PsbL, PsbM, PsbT, PsbX, PsbY, PsbZ, Psb30/Ycf12, at least 3 peripheral proteins of the oxygen-evolving complex and a large number of cofactors. It forms dimeric complexes.

The protein localises to the plastid. It is found in the chloroplast thylakoid membrane. Functionally, loosely associated component of the core of photosystem II (PSII), it is not always seen in crystals. PSII is a light-driven water plastoquinone oxidoreductase, using light energy to abstract electrons from H(2)O, generating a proton gradient subsequently used for ATP formation. The sequence is that of Photosystem II reaction center protein Y from Pyropia yezoensis (Susabi-nori).